The sequence spans 312 residues: uncharacterized protein (312 aa).

The protein belongs to the asfivirus CP312R family.

It localises to the virion. This is an uncharacterized protein from African swine fever virus (isolate Tick/Malawi/Lil 20-1/1983) (ASFV).